A 405-amino-acid chain; its full sequence is MGGPYIGIVADDLTGSGDTAVQFVRAGWATQLSVGGAEQALADPAVRQAEVLAVTTHSRPLAAADAAAVVRGEVERLRAAGVQRLYKKVDSTLRGAFKAEIDAARLAWGEDAIAVVCPAFPVTGRTVRQGVLYVGDRPVTETSAATDPVTPVTESHIPTLLGCAQLAAQAGETPAELARRIAAAAPVVVVDALDDADVQRLARAIGVLGQRAVPVGSGGLAAPLARVWAGGQAAGPVLVVVTSQHSAARQQAAALQQAGARTWAPTLAQLADDRNWAAWTAEVEAAEHGMPAVDALMLLAPEGRLAGLDADSVARRLGELAARLVLAHGAAGVVATGGDGASAVLAALQASGIALVDEVTGGVPLGTLTGGQAAGLPVVTKAGGFGEQDVLIRAAQAIRERRFTK.

Residues Asp-12, Arg-59, and 88 to 91 (KVDS) each bind substrate. Residues Ser-243, 337–340 (GGDG), and Gly-383 contribute to the ATP site.

Belongs to the four-carbon acid sugar kinase family.

It catalyses the reaction D-threonate + ATP = 4-O-phospho-D-threonate + ADP + H(+). Functionally, catalyzes the ATP-dependent phosphorylation of D-threonate to D-threonate 4-phosphate. Can also phosphorylate 4-hydroxy-L-threonine, with lower efficiency. The chain is D-threonate kinase from Bordetella bronchiseptica (strain ATCC BAA-588 / NCTC 13252 / RB50) (Alcaligenes bronchisepticus).